The primary structure comprises 954 residues: SWI/SNF-related matrix-associated actin-dependent regulator of chromatin subfamily A-like protein 1 (954 aa).

Disordered stretches follow at residues 1-20 (MSLP…RQKA) and 27-238 (KLLA…NSQK). S2 carries the post-translational modification N-acetylserine. The stretch at 3 to 34 (LPLTEEQRKKIEENRQKALARRAEKLLAEQHQ) forms a coiled coil. The interval 5–30 (LTEEQRKKIEENRQKALARRAEKLLA) is mediates interaction with RPA2. The span at 7–20 (EEQRKKIEENRQKA) shows a compositional bias: basic and acidic residues. A compositionally biased stretch (polar residues) spans 72 to 83 (KQQNLSSSSNAD). Residues S112, S123, S129, and S151 each carry the phosphoserine modification. Composition is skewed to polar residues over residues 171–183 (KSSQ…SSGQ) and 197–238 (ASPS…NSQK). A Phosphoserine modification is found at S198. HARP domains are found at residues 226 to 303 (SGSS…QPLE) and 327 to 398 (SLSF…DPLP). Residues 445-600 (NFAIAKGGRL…YTQIIAVKPT (156 aa)) enclose the Helicase ATP-binding domain. Residue 458–465 (DDMGLGKT) coordinates ATP. Positions 549–552 (DESH) match the DESH box motif. The short motif at 644–661 (RRLKSDVLSQLPAKQRKI) is the Nuclear localization signal element. The Helicase C-terminal domain occupies 716–869 (YILDLLESGR…ETNFSEMTES (154 aa)). The interval 904–934 (ESFDPGSASGTSGSSSQNMGDTLDESSLTAS) is disordered. The span at 909–919 (GSASGTSGSSS) shows a compositional bias: low complexity. Polar residues predominate over residues 920–934 (QNMGDTLDESSLTAS).

Belongs to the SNF2/RAD54 helicase family. SMARCAL1 subfamily. In terms of assembly, interacts with RPA2; the interaction is direct and mediates the recruitment by the RPA complex of SMARCAL1 to sites of DNA damage. Post-translationally, DNA damage-regulated phosphorylation by kinases that may include ATM, ATR and PRKDC. As to expression, ubiquitously expressed, with high levels in testis.

The protein localises to the nucleus. It carries out the reaction ATP + H2O = ADP + phosphate + H(+). Functionally, ATP-dependent annealing helicase that binds selectively to fork DNA relative to ssDNA or dsDNA and catalyzes the rewinding of the stably unwound DNA. Rewinds single-stranded DNA bubbles that are stably bound by replication protein A (RPA). Acts throughout the genome to reanneal stably unwound DNA, performing the opposite reaction of many enzymes, such as helicases and polymerases, that unwind DNA. May play an important role in DNA damage response by acting at stalled replication forks. This Homo sapiens (Human) protein is SWI/SNF-related matrix-associated actin-dependent regulator of chromatin subfamily A-like protein 1.